The following is a 129-amino-acid chain: Large ribosomal subunit protein bL17 (129 aa).

The protein belongs to the bacterial ribosomal protein bL17 family. As to quaternary structure, part of the 50S ribosomal subunit. Contacts protein L32.

This Buchnera aphidicola subsp. Baizongia pistaciae (strain Bp) protein is Large ribosomal subunit protein bL17.